Consider the following 66-residue polypeptide: Ranalexin (66 aa).

A signal peptide spans 1–20; that stretch reads MFTLKKSLLLLFFLGTINLS. The propeptide at 21–44 is small acidic peptide; sequence LCEEERNAEEERRDNPDERDVEVE. Residues cysteine 60 and cysteine 66 are joined by a disulfide bond.

Belongs to the frog skin active peptide (FSAP) family. Brevinin subfamily. Expressed by the skin dorsal glands.

The protein localises to the secreted. Functionally, potent microbicidal activity, active against S.aureus and E.coli. It also acts as a membrane-disruptive agent at higher concentrations. This is Ranalexin from Aquarana catesbeiana (American bullfrog).